The sequence spans 6548 residues: Epiplakin (6548 aa).

Thr-33 carries the phosphothreonine modification. Plectin repeat units follow at residues 41 to 78 (AALPTTARSIAGVYVEASGQTQSIYAAIKQGLLPTGLG), 79 to 116 (LTLLEAQAATGGLVDLAQGQLLPVSEALRRGLVGLELK), 117 to 154 (EKLLAAERAVTGYPDPYGGEKLSLFQAIKKEVVDRTLG), 155 to 192 (WRLLEAQLATGGLVDPTQGVQVAPELACQQGLLDKETW), 285 to 322 (RRYLEGTGGLAGVVLLPGGHKKSFFQATVEHLVSKGIA), 323 to 360 (LQLLEAQAATRTLVHPTTGQRLWVEEAVKAGLVGPELH), 362 to 398 (QLLVAEQAVTGYYDPFSSSRIPVFQAMKKGLVDQPLA), 399 to 436 (LRLLDAQLATGGLICPARRFRLPLEAALRFGCLDEETR), and 437 to 470 (QRLSQAMGFSDPTTHDRLGYEQLLALSVTDPETG). The tract at residues 49-1123 (SIAGVYVEAS…KASGLHLLPL (1075 aa)) is interaction with KRT5. Residues 545 to 565 (SVEELAAELKNIVEQAAATAK) adopt a coiled-coil conformation. Plectin repeat units lie at residues 611–648 (QRYLQGTGSIAGLLLPDSQERLSIYEARSKGLLRPGTA), 649–686 (LILLEAQAATGFIIDPKENKRYSVEEALRAGVIGPDVY), 687–724 (AKLLSAEHAVTGYTDPYSGEQISLFQAMQRDLIVRDHG), 725–762 (IRLLEAQIATGGVIDPVHSHRVPVDVAYQRGYFDQILN), and 766–800 (LDPSDDTKGFFDPNTHENLTYLQLLERCVHDSETG). Residues 851–886 (TEDRRRQLLQRYRQRKITLEQVTQLLEKEMRRWTDI) adopt a coiled-coil conformation. Plectin repeat units lie at residues 931–968 (HRYLRGSGTVGGVLLKPSNQRISLYQAMKQKLLPPSTA), 969–1006 (LALLEAQAATGTITDPCSMETLSVDEAVCRGVVGAEVY), 1007–1044 (GKLKRAEHSITGYRDPFSGKKVSLFRAMKKGLVPVEQA), 1224–1284 (QETL…TGLG), 1285–1322 (QQLLEAQVASGFLVNPLTNQRLSVEGAVKAGLVGMEQS), 1323–1360 (EHLRQVEKAVTGYSDPFSGGSLSLWQAMEKGLVTQSEA), 1361–1398 (FPLLQVQLATGGVVDPVHGVHLPQEVAYKLGLLDEQTS), and 1402–1436 (TATGKENKLFFDPNSREKVTYQQLRELCVLDADTG). A Phosphothreonine modification is found at Thr-1551. 5 Plectin repeats span residues 1572–1609 (RRSLEGGNFIAGVLIQDTKEKMSIPEALRRHILRPGTA), 1610–1647 (LVLLEAQAATGFIIDPVENRKLTVEQAFQAGMFGKETY), 1648–1685 (MKLLSAERAVTGYTDPYTGEQISLFQAMQRDLIVRDHG), 1686–1723 (IRLLEAQIATGGIIDPVHSHRVPVDVAYQRGYFNEEMN), and 1727–1761 (SDPSDDTKGFFDPNTHENLTYLQLLERCVEDPETG). Residues 1580–6545 (FIAGVLIQDT…PETGLLFLSL (4966 aa)) form an interaction with KRT5 region. Residues 1819–1851 (RKLLREYRAQNIGLENLLEVITSTVEETEKQSQ) adopt a coiled-coil conformation. Plectin repeat units follow at residues 1898–1935 (RVYLEGSNYIAGVIAPLTQKVMSFYEASREELIPAGFA), 1936–1973 (AQMLEAQAATGYLMDPCTNQRLCVDEAIAAGLVGEDLR), 1974–2011 (ERLVNAEMAAKGYKDPATGETIPLYQAMERKLVGREEA), 2012–2049 (LRLLEVQVATGGVIDPRHHHRVPLDTACQRGCMCDDSL), 2225–2267 (KRYL…PGTA), 2268–2305 (LVLLEAQAATGFIIDPVNNRRLSVEEAVAAGVVGGEIQ), 2306–2343 (EKLLSAERAVTGYTDPYTGDQISLFQAMQRDLIVRDHG), 2344–2381 (IRLLEAQIATGGVIDPVHSHRVPVDVAYQRGYFDEDMN), and 2385–2419 (ADPGDDTKGFFDPNTHENLTYLQLLRRCVRDPETG). Phosphoserine is present on residues Ser-2430 and Ser-2508. The interval 2578–2626 (AEETQESKPKPRDASLKQQDTGARGSGTSPDEGDAQDSSESARQQQEQT) is disordered. The span at 2582 to 2592 (QESKPKPRDAS) shows a compositional bias: basic and acidic residues. Polar residues-rich tracts occupy residues 2593–2606 (LKQQDTGARGSGTS) and 2615–2626 (SSESARQQQEQT). Plectin repeat units follow at residues 2740–2782 (KRYL…PGTA), 2783–2820 (LVLLEAQAATGFIIDPVNNRRLSVEEAVAAGVVGGEIQ), 2821–2858 (EKLLSAERAVTGYTDPYTGDQISLFQAMQRDLIVRDHG), 2859–2896 (IRLLEAQIATGGVIDPVHSHRVPVDVAYQRGYFDEDMN), and 2900–2934 (ADPGDDTKGFFDPNTHENLTYLQLLRRCVRDPETG). The segment at 2748–2940 (CIAGVLVPVQ…PETGFYMLQL (193 aa)) is interaction with KRT14. The disordered stretch occupies residues 3093–3144 (AEETQESKPKPRDASLKQQDTGARGSGTSPDEGDAQDSSESARQQQEQTLRA). The span at 3097–3107 (QESKPKPRDAS) shows a compositional bias: basic and acidic residues. Composition is skewed to polar residues over residues 3108-3121 (LKQQDTGARGSGTS) and 3130-3144 (SSESARQQQEQTLRA). Ser-3220 is modified (phosphoserine). Plectin repeat units lie at residues 3255 to 3297 (KRYL…PGTA), 3298 to 3335 (LVLLEAQAATGFIIDPVNNRRLSVEEAVAAGVVGGEIQ), 3336 to 3373 (EKLLSAERAVTGYTDPYTGDQISLFQAMQRDLIVRDHG), 3374 to 3411 (IRLLEAQIATGGVIDPVHSHRVPVDVAYQRGYFDEDMN), and 3415 to 3449 (ADPGDDTKGFFDPNTHENLTYLQLLRRCVRDPETG). Ser-3460 and Ser-3538 each carry phosphoserine. A disordered region spans residues 3608–3659 (AEETQESKPKPRDASLKQQDTGARGSGTSPDEGDAQDSSESARQQQEQTLRA). Residues 3612–3622 (QESKPKPRDAS) show a composition bias toward basic and acidic residues. 2 stretches are compositionally biased toward polar residues: residues 3623–3636 (LKQQDTGARGSGTS) and 3645–3659 (SSESARQQQEQTLRA). Ser-3735 is subject to Phosphoserine. Plectin repeat units follow at residues 3770–3812 (KRYL…PGTA), 3813–3850 (LVLLEAQAATGFIIDPVNNRRLSVEEAVAAGVVGGEIQ), 3851–3888 (EKLLSAERAVTGYTDPYTGDQISLFQAMQRDLIVRDHG), 3889–3926 (IRLLEAQIATGGVIDPVHSHRVPVDVAYQRGYFDEDMN), and 3930–3964 (ADPGDDTKGFFDPNTHENLTYLQLLRRCVRDPETG). Phosphoserine occurs at positions 3975 and 4053. The disordered stretch occupies residues 4123–4174 (AEETQESKPKPRDASLKQQDTGARGSGTSPDEGDAQDSSESARQQQEQTLRA). Positions 4127 to 4137 (QESKPKPRDAS) are enriched in basic and acidic residues. 2 stretches are compositionally biased toward polar residues: residues 4138–4151 (LKQQDTGARGSGTS) and 4160–4174 (SSESARQQQEQTLRA). Plectin repeat units follow at residues 4285–4327 (KRYL…PGTA), 4328–4365 (LVLLEAQAATGFIIDPVNNRRLSVEEAVAAGVVGGEIQ), 4366–4403 (EKLLSAERAVTGYTDPYTGDQISLFQAMQRDLIVRDHG), 4404–4441 (IRLLEAQIATGGVIDPVHSHRVPVDVAYQRGYFDEDMN), and 4445–4479 (ADPGDDTKGFFDPNTHENLTYLQLLRRCVRDPETG). Residues 4638-4689 (AEETQESKPKPRDASLKQQDTGARGSGTSPDEGDAQDSSESARQQQEQTLRA) are disordered. Residues 4642–4652 (QESKPKPRDAS) show a composition bias toward basic and acidic residues. 2 stretches are compositionally biased toward polar residues: residues 4653–4666 (LKQQDTGARGSGTS) and 4675–4689 (SSESARQQQEQTLRA). At Ser-4765 the chain carries Phosphoserine. Plectin repeat units lie at residues 4800-4842 (KRYL…PGTA), 4843-4880 (LVLLEAQAATGFIIDPVNNRRLSVEEAVAAGVVGGEIQ), 4881-4918 (EKLLSAERAVTGYTDPYTGDQISLFQAMQRDLIVRDHG), 4919-4956 (IRLLEAQIATGGVIDPVHSHRVPVDVAYQRGYFDEDMN), and 4960-4994 (ADPGDDTKGFFDPNTHENLTYLQLLRRCVRDPETG). Phosphoserine is present on residues Ser-5005 and Ser-5083. Positions 5153 to 5204 (AEETQESKPKPRDASLKQQDTGARGSGTSPDEGDAQDSSESARQQQEQTLRA) are disordered. Over residues 5157–5167 (QESKPKPRDAS) the composition is skewed to basic and acidic residues. Composition is skewed to polar residues over residues 5168-5181 (LKQQDTGARGSGTS) and 5190-5204 (SSESARQQQEQTLRA). Plectin repeat units lie at residues 5315–5357 (KRYL…PGTA), 5358–5395 (LVLLEAQAATGFIIDPVNNRRLSVEEAVAAGVVGGEIQ), 5396–5433 (EKLLSAERAVTGYTDPYTGDQISLFQAMQRDLIVRDHG), 5434–5471 (IRLLEAQIATGGVIDPVHSHRVPVDVAYQRGYFDEDMN), and 5475–5509 (ADPGDDTKGFFDPNTHENLTYLQLLRRCVRDPETG). The disordered stretch occupies residues 5668–5719 (AEETQESKPKPRDASLKQQDTGARGSGTSPDEGDAQDSSESARQQQEQTLRA). Residues 5672–5682 (QESKPKPRDAS) are compositionally biased toward basic and acidic residues. 2 stretches are compositionally biased toward polar residues: residues 5683–5696 (LKQQDTGARGSGTS) and 5705–5719 (SSESARQQQEQTLRA). Ser-5795 bears the Phosphoserine mark. 5 Plectin repeats span residues 5830–5872 (KRYL…PGTA), 5873–5910 (LVLLEAQAATGFIIDPVNNRRLSVEEAVAAGVVGGEIQ), 5911–5948 (EKLLSAERAVTGYTDPYTGDQISLFQAMQRDLIVRDHG), 5949–5986 (IRLLEAQIATGGVIDPVHSHRVPVDVAYQRGYFDEDMN), and 5990–6024 (ADPGDDTKGFFDPNTHENLTYLQLLRRCVRDPETG). 2 positions are modified to phosphoserine: Ser-6035 and Ser-6113. Residues 6183–6234 (AEETQESKPKPRDASLKQQDTGARGSGTSPDEGDAQDSSESARQQQEQTLRA) are disordered. The segment covering 6187 to 6197 (QESKPKPRDAS) has biased composition (basic and acidic residues). Composition is skewed to polar residues over residues 6198–6211 (LKQQDTGARGSGTS) and 6220–6234 (SSESARQQQEQTLRA). Phosphoserine is present on Ser-6310. Plectin repeat units lie at residues 6345 to 6387 (KRYL…PGTA), 6388 to 6425 (LVLLEAQAATGFIIDPVNNRRLSVEEAVAAGVVGGEIQ), 6426 to 6463 (EKLLSAERAVTGYTDPYTGDQISLFQAMQRDLIVKNHG), 6464 to 6501 (IRLLEAQIATGGVIDPVHSHRVPVDVAYQRGYFDQEMN), and 6505 to 6539 (ADPGDDTKGFFDPNTHENLTYLQLLQRATIDPETG).

The protein belongs to the plakin or cytolinker family. Interacts with KRT5, KRT14 and KRT5/KRT14 heterotetramer; interacts preferentially with assembled filaments rather than keratin monomers. Interacts with KRT8 and KRT18 and KRT8/KRT18 heterotetramer; interacts preferentially with assembled filaments rather than keratin monomers. Interacts with KRT1, VIM and DES; interaction is stronger with KRT1 than with VIM or DES; interaction is dependent of higher-order structure of intermediate filament. As to expression, high levels in skin, small intestine and salivary gland. Lower levels in lung, uterus and liver. Not detected in brain, kidney, muscle, heart or spleen. In skin, expressed in all epidermal layers but not in the dermis. In intestine, expressed exclusively in the epithelial cell layer of the villi. In liver, expressed at hepatocyte margins. Around the region of the wound, expressed in the upper half of the epidermis. Weakly expressed on the basilar side of the suprabasal layer of the epidermis at the wound's edge. Expressed strongly in the upper layer of the epidermis, especially in larger keratinocytes. Expressed in undifferentiated primary keratinocytes. Strongly expressed in ductal cells, and also expressed in acinar cells. Expressed in hepatocytes and cholangiocytes.

It is found in the cytoplasm. The protein resides in the cytoskeleton. It localises to the apicolateral cell membrane. Its subcellular location is the basolateral cell membrane. The protein localises to the cell junction. It is found in the hemidesmosome. The protein resides in the tight junction. It localises to the cell projection. Functionally, cytoskeletal linker protein that connects to intermediate filaments and controls their reorganization in response to stress. In response to mechanical stress like wound healing, is associated with the machinery for cellular motility by slowing down keratinocyte migration and proliferation and accelerating keratin bundling in proliferating keratinocytes thus contributing to tissue architecture. However in wound healing in corneal epithelium also positively regulates cell differentiation and proliferation and negatively regulates migration thereby controlling corneal epithelium morphogenesis and integrity. In response to cellular stress, plays a role in keratin filament reorganization, probably by protecting keratin filaments against disruption. During liver and pancreas injuries, plays a protective role by chaperoning disease-induced intermediate filament reorganization. This Mus musculus (Mouse) protein is Epiplakin.